Here is a 553-residue protein sequence, read N- to C-terminus: Flotillin family inner membrane protein YqiK (553 aa).

Residues 1 to 9 (MDDIVNSVP) are Periplasmic-facing. A helical membrane pass occupies residues 10–30 (SWMFTAIIAVCILFIIGIIFA). The Cytoplasmic segment spans residues 31–553 (RLYRRASAEQ…STTPVEEKAE (523 aa)).

This sequence belongs to the band 7/mec-2 family. Flotillin subfamily. Homooligomerizes.

It localises to the cell inner membrane. It is found in the membrane raft. Found in membrane microdomains that may be equivalent to eukaryotic membrane rafts. FMMs are highly dynamic and increase in number as cells age. Flotillins are thought to be important factors in membrane fluidity. The chain is Flotillin family inner membrane protein YqiK (yqiK) from Escherichia coli (strain K12).